An 802-amino-acid chain; its full sequence is Ribosomal protein S6 kinase alpha-5 (802 aa).

Residues 1 to 22 (MEEEGGSSGGAAGTSADGGDGG) are compositionally biased toward gly residues. Positions 1–23 (MEEEGGSSGGAAGTSADGGDGGE) are disordered. In terms of domain architecture, Protein kinase 1 spans 49 to 318 (FELLKVLGTG…ADEIKEHLFF (270 aa)). Residues 55–63 (LGTGAYGKV) and Lys81 each bind ATP. Asp177 functions as the Proton acceptor in the catalytic mechanism. A Phosphoserine; by autocatalysis modification is found at Ser212. Positions 319–387 (QKINWDDLAA…VAPSILFKRN (69 aa)) constitute an AGC-kinase C-terminal domain. Residue Ser360 is modified to Phosphoserine; by MAPK1, MAPK3 and MAPK14. Phosphoserine; by autocatalysis occurs at positions 376 and 381. Residues 426-687 (DLKDKPLGEG…MSGLRYNEWL (262 aa)) enclose the Protein kinase 2 domain. ATP is bound by residues 432–440 (LGEGSFSIC) and Lys455. Residue Asp544 is the Proton acceptor of the active site. The residue at position 581 (Thr581) is a Phosphothreonine; by MAPK1, MAPK3 and MAPK14. 4 positions are modified to phosphoserine: Ser647, Ser657, Ser691, and Ser695. At Thr700 the chain carries Phosphothreonine; by MAPK1, MAPK3 and MAPK14. Positions 741-802 (AKRRKMKKTS…TLFQFSDSVA (62 aa)) are disordered. Low complexity predominate over residues 749 to 779 (TSTSTETRSSSSESSHSSSSHSHGKTTPTKT). 3 positions are modified to phosphoserine; by autocatalysis: Ser750, Ser752, and Ser758. The span at 780–802 (LQPSNPADSNNPETLFQFSDSVA) shows a compositional bias: polar residues. Ser798 bears the Phosphoserine mark.

Belongs to the protein kinase superfamily. AGC Ser/Thr protein kinase family. S6 kinase subfamily. Forms a complex with either MAPK1/ERK2 or MAPK3/ERK1 in quiescent cells which transiently dissociates following mitogenic stimulation. Also associates with MAPK14/p38-alpha. Activated RPS6KA5 associates with and phosphorylates the NF-kappa-B p65 subunit RELA. Interacts with CREBBP and EP300. Mg(2+) serves as cofactor. Post-translationally, ser-376 and Thr-581 phosphorylation is required for kinase activity. Ser-376 and Ser-212 are autophosphorylated by the C-terminal kinase domain, and their phosphorylation is essential for the catalytic activity of the N-terminal kinase domain. Phosphorylated at Ser-360, Thr-581 and Thr-700 by MAPK1/ERK2, MAPK3/ERK1 and MAPK14/p38-alpha. Autophosphorylated at Ser-750, Ser-752 and Ser-758 by the N-terminal kinase domain. Ubiquitinated.

It is found in the nucleus. It catalyses the reaction L-seryl-[protein] + ATP = O-phospho-L-seryl-[protein] + ADP + H(+). The catalysed reaction is L-threonyl-[protein] + ATP = O-phospho-L-threonyl-[protein] + ADP + H(+). Activated by phosphorylation at Ser-360, Thr-581 and Thr-700 by MAPK1/ERK2, MAPK3/ERK1 and MAPK14/p38-alpha, and by further autophosphorylation of Ser-212, Ser-376 and Ser-381 by the activated C-terminal kinase domain. The active N-terminal kinase domain finally phosphorylates downstream substrates, as well as Ser-750, Ser-752 and Ser-758 in its own C-terminal region. Serine/threonine-protein kinase that is required for the mitogen or stress-induced phosphorylation of the transcription factors CREB1 and ATF1 and for the regulation of the transcription factors RELA, STAT3 and ETV1/ER81, and that contributes to gene activation by histone phosphorylation and functions in the regulation of inflammatory genes. Phosphorylates CREB1 and ATF1 in response to mitogenic or stress stimuli such as UV-C irradiation, epidermal growth factor (EGF) and anisomycin. Plays an essential role in the control of RELA transcriptional activity in response to TNF and upon glucocorticoid, associates in the cytoplasm with the glucocorticoid receptor NR3C1 and contributes to RELA inhibition and repression of inflammatory gene expression. In skeletal myoblasts is required for phosphorylation of RELA at 'Ser-276' during oxidative stress. In erythropoietin-stimulated cells, is necessary for the 'Ser-727' phosphorylation of STAT3 and regulation of its transcriptional potential. Phosphorylates ETV1/ER81 at 'Ser-191' and 'Ser-216', and thereby regulates its ability to stimulate transcription, which may be important during development and breast tumor formation. Directly represses transcription via phosphorylation of 'Ser-1' of histone H2A. Phosphorylates 'Ser-10' of histone H3 in response to mitogenics, stress stimuli and EGF, which results in the transcriptional activation of several immediate early genes, including proto-oncogenes c-fos/FOS and c-jun/JUN. May also phosphorylate 'Ser-28' of histone H3. Mediates the mitogen- and stress-induced phosphorylation of high mobility group protein 1 (HMGN1/HMG14). In lipopolysaccharide-stimulated primary macrophages, acts downstream of the Toll-like receptor TLR4 to limit the production of pro-inflammatory cytokines. Functions probably by inducing transcription of the MAP kinase phosphatase DUSP1 and the anti-inflammatory cytokine interleukin 10 (IL10), via CREB1 and ATF1 transcription factors. Plays a role in neuronal cell death by mediating the downstream effects of excitotoxic injury. Phosphorylates TRIM7 at 'Ser-107' in response to growth factor signaling via the MEK/ERK pathway, thereby stimulating its ubiquitin ligase activity. The sequence is that of Ribosomal protein S6 kinase alpha-5 (RPS6KA5) from Pongo abelii (Sumatran orangutan).